A 604-amino-acid chain; its full sequence is Procollagen galactosyltransferase 1 (604 aa).

An N-terminal signal peptide occupies residues 1–18 (MHLLCFFFLLLWTGPARS). N-linked (GlcNAc...) asparagine glycosylation is found at Asn-78, Asn-166, Asn-363, and Asn-561. Positions 570-580 (RARSRKSREQE) are enriched in basic and acidic residues. The interval 570-604 (RARSRKSREQEELSSEAQNTDVLQSPLDSTARDEL) is disordered. Residues 584–597 (SEAQNTDVLQSPLD) are compositionally biased toward polar residues. The Prevents secretion from ER signature appears at 601-604 (RDEL).

It belongs to the glycosyltransferase 25 family.

It localises to the endoplasmic reticulum lumen. It catalyses the reaction (5R)-5-hydroxy-L-lysyl-[collagen] + UDP-alpha-D-galactose = (5R)-5-O-(beta-D-galactosyl)-5-hydroxy-L-lysyl-[collagen] + UDP + H(+). In terms of biological role, beta-galactosyltransferase that transfers beta-galactose to hydroxylysine residues of type I collagen. By acting on collagen glycosylation, facilitates the formation of collagen triple helix. This chain is Procollagen galactosyltransferase 1 (colgalt1), found in Danio rerio (Zebrafish).